Here is a 202-residue protein sequence, read N- to C-terminus: MRLERLNYNKIKIFLTFDDLSERGLTKEDLWRNAPKVQQLFRDMMQEANKELGFEADGPIAVEVFSLQAQGMVVIVTKENQEMDTDDEFRDEFIEMQVTLDESEHILYEFATLDDVINLSNRLYNLGVTGGKLYTWDERFYLWVEEEEQIQLLKADFIAILAEYGNPSTATIYRIMEYGKELMDVNAIEQIHNYFVKKQNLS.

The protein belongs to the MecA family. As to quaternary structure, homodimer.

Enables the recognition and targeting of unfolded and aggregated proteins to the ClpC protease or to other proteins involved in proteolysis. Acts negatively in the development of competence by binding ComK and recruiting it to the ClpCP protease. When overexpressed, inhibits sporulation. Also involved in Spx degradation by ClpC. This chain is Adapter protein MecA 2 (mecA2), found in Bacillus cereus (strain ATCC 14579 / DSM 31 / CCUG 7414 / JCM 2152 / NBRC 15305 / NCIMB 9373 / NCTC 2599 / NRRL B-3711).